We begin with the raw amino-acid sequence, 64 residues long: Disintegrin VB7A (64 aa).

One can recognise a Disintegrin domain in the interval 1–64 (NSGNPCCDPV…SDCPRNPYKD (64 aa)). 4 disulfide bridges follow: Cys-6–Cys-29, Cys-20–Cys-26, Cys-25–Cys-50, and Cys-38–Cys-57. The Cell attachment site signature appears at 42 to 44 (RGD).

This sequence belongs to the disintegrin family. Dimeric disintegrin subfamily. Heterodimer with VB7B; disulfide-linked. In terms of tissue distribution, expressed by the venom gland.

The protein resides in the secreted. Its function is as follows. Poor inhibitor of platelet aggregation. The disintegrin inhibits the adhesion of cells expressing the RGD-dependent integrin alpha-5/beta-1 (ITGA5/ITGB1) to immobilized fibronectin. Inhibition on alpha-2b/beta-3 (ITGA2B/ITGB3) is low. The chain is Disintegrin VB7A from Vipera berus berus (Common viper).